The following is a 120-amino-acid chain: Putative defensin-like protein 179 (120 aa).

Positions 1-27 (MERTSTSLLFLLSLLIIFASAVNQIRA) are cleaved as a signal peptide. Intrachain disulfides connect C37–C56, C40–C63, C44–C65, C74–C120, C85–C105, C90–C114, and C94–C116.

Belongs to the DEFL family.

It localises to the secreted. The sequence is that of Putative defensin-like protein 179 (LCR57) from Arabidopsis thaliana (Mouse-ear cress).